Reading from the N-terminus, the 152-residue chain is MPKSILLINGPNLNLLGTREPHIYGSTTLADVEAASKAHAESLGATLESFQSNHEGAIVDRIQAARGRVDGIVINPGAYTHTSVAIRDALLGVGIPFIELHVSNVHAREPWRHHSYFSDKAAGIIVGLGVYGYRVAVEHVAVNFKELEKANL.

Catalysis depends on Tyr24, which acts as the Proton acceptor. Asn75, His81, and Asp88 together coordinate substrate. His101 functions as the Proton donor in the catalytic mechanism. Substrate is bound by residues 102-103 (VS) and Arg112.

The protein belongs to the type-II 3-dehydroquinase family. As to quaternary structure, homododecamer. Adopts a ring-like structure, composed of an arrangement of two hexameric rings stacked on top of one another.

The enzyme catalyses 3-dehydroquinate = 3-dehydroshikimate + H2O. Its pathway is aromatic compound metabolism; 3,4-dihydroxybenzoate biosynthesis; 3,4-dihydroxybenzoate from 3-dehydroquinate: step 1/2. Is involved in the catabolism of quinate. Allows the utilization of quinate as carbon source via the beta-ketoadipate pathway. The polypeptide is Catabolic 3-dehydroquinase 1 (Aspergillus terreus (strain NIH 2624 / FGSC A1156)).